A 393-amino-acid chain; its full sequence is MLGLRLPVCRRAVMASPRACWRLWHSSTAAAAGMQDLSAVLQRNLALRNQSLYNQSSDTIRCSMFDSDGALIGGAAADIRREELIQKHGLLPRDLRKIEMARRHDLVPIVLVRDRCIMVSLLTIRALVKSDTVLLFDPMGIGMDSVAHTRFVADLQTRLKNQGAPGLGKDPLPYEFRALESIFITALANLTAELRVHLAVTKGALHDLEYGIDKDKLKFLLVQNKKLSVFHKKSLLMREMMDDLMDQDDVLSEMYLSEKMRGKPRDVADHSELEMVLETYYTQVNEIVQSIEGAIANVRTTEEIINIILDSNRNELMLLGLRFAIGLLSLGSVMFVAALYGMNLENFIEEGNVGFALVTATGLVLMVCLFRYSIKRLHKLQKMTLLGGQGRHS.

Residues 1 to 45 constitute a mitochondrion transit peptide; that stretch reads MLGLRLPVCRRAVMASPRACWRLWHSSTAAAAGMQDLSAVLQRNL. A run of 2 helical transmembrane segments spans residues 323 to 343 and 350 to 370; these read FAIG…YGMN and EGNV…VCLF. The YGMN motif lies at 340-343; the sequence is YGMN.

The protein belongs to the CorA metal ion transporter (MIT) (TC 1.A.35) family. Forms homooligomers. Interacts with MRS2.

The protein resides in the mitochondrion inner membrane. Its function is as follows. Mitochondrial inner membrane magnesium transporter required for mitochondrial magnesium homeostasis. Modulates the conductance of the MRS2 channel. Involved in the splicing of mRNA group II introns in mitochondria by affecting mitochondrial magnesium concentrations, which are critical for group II intron splicing. The sequence is that of Mitochondrial inner membrane magnesium transporter LPE10 (LPE10) from Eremothecium gossypii (strain ATCC 10895 / CBS 109.51 / FGSC 9923 / NRRL Y-1056) (Yeast).